Consider the following 705-residue polypeptide: Beta-xylosidase (705 aa).

This sequence belongs to the glycosyl hydrolase 52 family.

The enzyme catalyses Hydrolysis of (1-&gt;4)-beta-D-xylans, to remove successive D-xylose residues from the non-reducing termini.. It functions in the pathway glycan degradation; xylan degradation. In Geobacillus stearothermophilus (Bacillus stearothermophilus), this protein is Beta-xylosidase (xylA).